The following is a 210-amino-acid chain: Thymidylate kinase (210 aa).

D17 is a binding site for dGMP. D17 is a dTMP binding site. ATP is bound by residues R18, S19, G20, K21, S22, and T23. Positions 47, 74, 78, 99, and 107 each coordinate dTMP. The dGMP site is built by F74, R78, R99, Y107, S108, and Y153. The tract at residues 143-155 is LID; sequence QNRSDYGEEIYEK. An ATP-binding site is contributed by R182.

It belongs to the thymidylate kinase family. In terms of assembly, homodimer. Binds two dTMP molecules per dimer. Binds only one dTGP molecule per dimer.

The catalysed reaction is dTMP + ATP = dTDP + ADP. It catalyses the reaction dGMP + ATP = dGDP + ADP. It participates in pyrimidine metabolism; dTTP biosynthesis. Its activity is regulated as follows. Inhibited by deoxyguanosine (dG), deoxythymidine (dT) and azidothymidine (AZT). Catalyzes the phosphorylation of thymidine monophosphate (dTMP) to thymidine diphosphate (dTDP), the immediate precursor for the DNA building block dTTP. Can also phosphorylate dGMP and to a lesser extent GMP, dUMP and dIMP. Can use either ATP or dATP as phosphate donors in presence of Mg(2+). The sequence is that of Thymidylate kinase from Plasmodium falciparum (isolate 3D7).